A 242-amino-acid chain; its full sequence is 2-C-methyl-D-erythritol 4-phosphate cytidylyltransferase (242 aa).

This sequence belongs to the IspD/TarI cytidylyltransferase family. IspD subfamily.

The catalysed reaction is 2-C-methyl-D-erythritol 4-phosphate + CTP + H(+) = 4-CDP-2-C-methyl-D-erythritol + diphosphate. The protein operates within isoprenoid biosynthesis; isopentenyl diphosphate biosynthesis via DXP pathway; isopentenyl diphosphate from 1-deoxy-D-xylulose 5-phosphate: step 2/6. Catalyzes the formation of 4-diphosphocytidyl-2-C-methyl-D-erythritol from CTP and 2-C-methyl-D-erythritol 4-phosphate (MEP). This chain is 2-C-methyl-D-erythritol 4-phosphate cytidylyltransferase, found in Vesicomyosocius okutanii subsp. Calyptogena okutanii (strain HA).